The sequence spans 341 residues: Phosphoribosylformylglycinamidine cyclo-ligase (341 aa).

The protein belongs to the AIR synthase family.

The protein resides in the cytoplasm. The enzyme catalyses 2-formamido-N(1)-(5-O-phospho-beta-D-ribosyl)acetamidine + ATP = 5-amino-1-(5-phospho-beta-D-ribosyl)imidazole + ADP + phosphate + H(+). It functions in the pathway purine metabolism; IMP biosynthesis via de novo pathway; 5-amino-1-(5-phospho-D-ribosyl)imidazole from N(2)-formyl-N(1)-(5-phospho-D-ribosyl)glycinamide: step 2/2. This Xanthomonas euvesicatoria pv. vesicatoria (strain 85-10) (Xanthomonas campestris pv. vesicatoria) protein is Phosphoribosylformylglycinamidine cyclo-ligase.